The chain runs to 180 residues: dCTP deaminase (180 aa).

Residues K101–R106 and D117 contribute to the dCTP site. E127 functions as the Proton donor/acceptor in the catalytic mechanism. 2 residues coordinate dCTP: Y159 and Q168.

The protein belongs to the dCTP deaminase family. Homotrimer.

The enzyme catalyses dCTP + H2O + H(+) = dUTP + NH4(+). It functions in the pathway pyrimidine metabolism; dUMP biosynthesis; dUMP from dCTP (dUTP route): step 1/2. In terms of biological role, catalyzes the deamination of dCTP to dUTP. The chain is dCTP deaminase from Ignicoccus hospitalis (strain KIN4/I / DSM 18386 / JCM 14125).